The chain runs to 704 residues: Glycine--tRNA ligase beta subunit (704 aa).

The protein belongs to the class-II aminoacyl-tRNA synthetase family. As to quaternary structure, tetramer of two alpha and two beta subunits.

The protein localises to the cytoplasm. The catalysed reaction is tRNA(Gly) + glycine + ATP = glycyl-tRNA(Gly) + AMP + diphosphate. The protein is Glycine--tRNA ligase beta subunit of Rhizobium johnstonii (strain DSM 114642 / LMG 32736 / 3841) (Rhizobium leguminosarum bv. viciae).